The following is a 347-amino-acid chain: Bombesin receptor-activated protein C6orf89 homolog (347 aa).

Residues 1-58 lie on the Cytoplasmic side of the membrane; sequence MDLAANEISIYDKLSETVDLVRQTGHQCGMSEKAIEKFIRQLLEKNEPQRPPPQYPLL. A helical transmembrane segment spans residues 59-79; sequence IVVYKVLATLGLILLTAYFVI. The Extracellular segment spans residues 80-347; that stretch reads QPFSPLAPEP…ICDGTAFSEL (268 aa).

In terms of assembly, homodimer. Interacts with BRS3. Interacts (via N-terminus) with SIN3B. Glycosylated.

It is found in the golgi apparatus membrane. Its subcellular location is the cytoplasm. Exhibits histone deacetylase (HDAC) enhancer properties. May play a role in cell cycle progression and wound repair of bronchial epithelial cells. The polypeptide is Bombesin receptor-activated protein C6orf89 homolog (Pongo abelii (Sumatran orangutan)).